The chain runs to 252 residues: 3-dehydroquinate dehydratase (252 aa).

3-dehydroquinate contacts are provided by residues serine 21, 46–48, and arginine 82; that span reads EWR. The active-site Proton donor/acceptor is histidine 143. The active-site Schiff-base intermediate with substrate is lysine 170. 3-dehydroquinate-binding residues include arginine 213, serine 232, and glutamine 236.

This sequence belongs to the type-I 3-dehydroquinase family. In terms of assembly, homodimer.

The catalysed reaction is 3-dehydroquinate = 3-dehydroshikimate + H2O. Its pathway is metabolic intermediate biosynthesis; chorismate biosynthesis; chorismate from D-erythrose 4-phosphate and phosphoenolpyruvate: step 3/7. Its activity is regulated as follows. Inhibited by (2R)-2-methyl-3-dehydroquinic acid. Functionally, involved in the third step of the chorismate pathway, which leads to the biosynthesis of aromatic amino acids. Catalyzes the cis-dehydration of 3-dehydroquinate (DHQ) and introduces the first double bond of the aromatic ring to yield 3-dehydroshikimate. The reaction involves the formation of an imine intermediate between the keto group of 3-dehydroquinate and the epsilon-amino group of a Lys-170 at the active site. This chain is 3-dehydroquinate dehydratase, found in Salmonella typhimurium (strain LT2 / SGSC1412 / ATCC 700720).